Consider the following 253-residue polypeptide: Testis-expressed protein 47 (253 aa).

This Mus musculus (Mouse) protein is Testis-expressed protein 47 (Tex47).